The chain runs to 272 residues: Dermonecrotic toxin SpeSicTox-betaIB2a (272 aa).

His-5 is a catalytic residue. Mg(2+) is bound by residues Glu-25 and Asp-27. The Nucleophile role is filled by His-41. 2 disulfides stabilise this stretch: Cys-45/Cys-51 and Cys-47/Cys-191. Asp-85 contacts Mg(2+).

The protein belongs to the arthropod phospholipase D family. Class II subfamily. Mg(2+) is required as a cofactor. As to expression, expressed by the venom gland.

It localises to the secreted. The enzyme catalyses an N-(acyl)-sphingosylphosphocholine = an N-(acyl)-sphingosyl-1,3-cyclic phosphate + choline. The catalysed reaction is an N-(acyl)-sphingosylphosphoethanolamine = an N-(acyl)-sphingosyl-1,3-cyclic phosphate + ethanolamine. It carries out the reaction a 1-acyl-sn-glycero-3-phosphocholine = a 1-acyl-sn-glycero-2,3-cyclic phosphate + choline. It catalyses the reaction a 1-acyl-sn-glycero-3-phosphoethanolamine = a 1-acyl-sn-glycero-2,3-cyclic phosphate + ethanolamine. In terms of biological role, dermonecrotic toxins cleave the phosphodiester linkage between the phosphate and headgroup of certain phospholipids (sphingolipid and lysolipid substrates), forming an alcohol (often choline) and a cyclic phosphate. This toxin acts on sphingomyelin (SM). It may also act on ceramide phosphoethanolamine (CPE), lysophosphatidylcholine (LPC) and lysophosphatidylethanolamine (LPE), but not on lysophosphatidylserine (LPS), and lysophosphatidylglycerol (LPG). It acts by transphosphatidylation, releasing exclusively cyclic phosphate products as second products. Induces dermonecrosis, hemolysis, increased vascular permeability, edema, inflammatory response, and platelet aggregation. The protein is Dermonecrotic toxin SpeSicTox-betaIB2a of Sicarius peruensis (Six-eyed sand spider).